The following is a 228-amino-acid chain: Max-interacting protein 1 (228 aa).

Disordered regions lie at residues 30 to 76 and 160 to 228; these read YASS…NELE and SIGS…SFAS. Residues 43 to 56 show a composition bias toward basic residues; the sequence is QHSKPPRRLSRAQK. The span at 57–70 shows a compositional bias: polar residues; the sequence is HSSGSSNTSTANRS. The bHLH domain occupies 67-119; the sequence is ANRSTHNELEKNRRAHLRLCLERLKVLIPLGPDCTRHTTLGLLNKAKAHIKKL. Positions 173–183 are enriched in acidic residues; sequence EREEIEVDVES. Over residues 207–228 the composition is skewed to polar residues; sequence SLQSVGSDEGYSSASVKLSFAS.

As to quaternary structure, efficient DNA binding requires dimerization with another bHLH protein. Binds DNA as a heterodimer with MAX. Interacts with SMC3. Interacts with RNF17.

It is found in the nucleus. In terms of biological role, transcriptional repressor. MXI1 binds with MAX to form a sequence-specific DNA-binding protein complex which recognizes the core sequence 5'-CAC[GA]TG-3'. MXI1 thus antagonizes MYC transcriptional activity by competing for MAX. Isoform Short, which lacks a segment, has a much stronger suppressive potential and associates with a SIN3 homologous protein. This Mus musculus (Mouse) protein is Max-interacting protein 1 (Mxi1).